The chain runs to 334 residues: 5-formaminoimidazole-4-carboxamide-1-(beta)-D-ribofuranosyl 5'-monophosphate synthetase (334 aa).

5-amino-1-(5-phospho-beta-D-ribosyl)imidazole-4-carboxamide contacts are provided by Ser10, His11, Ser71, and His75. The ATP-grasp domain maps to 78 to 325 (IELVENMKVP…IAMEIREAIE (248 aa)). ATP contacts are provided by residues 132 to 142 (KPHGAKGGKGY), 173 to 176 (QEYV), and Glu204. Asn232 is a binding site for 5-amino-1-(5-phospho-beta-D-ribosyl)imidazole-4-carboxamide. 2 residues coordinate Mg(2+): Glu270 and Glu283.

This sequence belongs to the phosphohexose mutase family. As to quaternary structure, homotrimer and homohexamer. It depends on Mg(2+) as a cofactor. Requires Mn(2+) as cofactor.

It carries out the reaction 5-amino-1-(5-phospho-beta-D-ribosyl)imidazole-4-carboxamide + formate + ATP = 5-formamido-1-(5-phospho-D-ribosyl)imidazole-4-carboxamide + ADP + phosphate. Its pathway is purine metabolism; IMP biosynthesis via de novo pathway; 5-formamido-1-(5-phospho-D-ribosyl)imidazole-4-carboxamide from 5-amino-1-(5-phospho-D-ribosyl)imidazole-4-carboxamide (formate route): step 1/1. Functionally, catalyzes the ATP- and formate-dependent formylation of 5-aminoimidazole-4-carboxamide-1-beta-d-ribofuranosyl 5'-monophosphate (AICAR) to 5-formaminoimidazole-4-carboxamide-1-beta-d-ribofuranosyl 5'-monophosphate (FAICAR) in the absence of folates. The protein is 5-formaminoimidazole-4-carboxamide-1-(beta)-D-ribofuranosyl 5'-monophosphate synthetase of Pyrococcus furiosus (strain ATCC 43587 / DSM 3638 / JCM 8422 / Vc1).